Reading from the N-terminus, the 312-residue chain is Bifunctional pinoresinol-lariciresinol reductase (312 aa).

NADP(+)-binding positions include G10 to G16, R35, and K44. The Proton acceptor role is filled by K139. R143 provides a ligand contact to NADP(+). H271 is a substrate binding site.

Belongs to the NmrA-type oxidoreductase family. Isoflavone reductase subfamily. Dimer. As to expression, expressed in young stems, young roots and petioles. In stems, expressed in radial parenchyma cells and in the cambial cells of developing secondary xylem.

The enzyme catalyses (+)-lariciresinol + NADP(+) = (+)-pinoresinol + NADPH + H(+). It carries out the reaction (-)-secoisolariciresinol + NADP(+) = (+)-lariciresinol + NADPH + H(+). Its function is as follows. Reductase involved in lignan biosynthesis. Catalyzes the enantioselective sequential conversion of (+)-pinoresinol into (+)-lariciresinol and of (+)-lariciresinol into (-)-secoisolariciresinol. Abstracts the 4R-hydride from the NADPH cofactor during catalysis. The protein is Bifunctional pinoresinol-lariciresinol reductase (PLR_Fi1) of Forsythia intermedia (Border forsythia).